Reading from the N-terminus, the 739-residue chain is Interleukin-17 receptor D (739 aa).

The signal sequence occupies residues 1–16 (MAPWLQLCSVFFTVNA). At 17–299 (CLNGSQLAVA…VHSPWAGPIR (283 aa)) the chain is on the extracellular side. Residues asparagine 19, asparagine 55, asparagine 62, asparagine 80, asparagine 137, asparagine 171, asparagine 206, and asparagine 277 are each glycosylated (N-linked (GlcNAc...) asparagine). Residues 300-320 (AVAITVPLVVISAFATLFTVM) traverse the membrane as a helical segment. Topologically, residues 321–739 (CRKKQQENIY…TDELHAVAPL (419 aa)) are cytoplasmic. Positions 355-509 (RPKVFLCYSS…LMDNLPQLCS (155 aa)) constitute an SEFIR domain. Disordered stretches follow at residues 614-635 (GPADSQHESQHGGLDQDGEARP) and 650-719 (VKAG…SSGS). Positions 667-702 (SSVPSSELSLPLMEGLSTDQTETSSLTESVSSSSGL) are enriched in low complexity.

In terms of assembly, interacts with MAP3K7. Self-associates. Interacts with FGFR1, FGFR2 and phosphorylated MAP2K1 or MAP2K2. Associates with a MAP2K1/2-MAPK1/3 complex. In terms of tissue distribution, expressed in umbilical vein endothelial cells and in several highly vascularized tissues such as kidney, colon, skeletal muscle, heart and small intestine. Highly expressed in ductal epithelial cells of salivary glands, seminal vesicles and the collecting tubules of the kidney. Isoform 1 is also highly expressed in both fetal and adult brain, pituitary, tonsils, spleen, adenoids, fetal kidney, liver, testes and ovary. Isoform 1 is also expressed at moderate levels in primary aortic endothelial cells and adrenal medulla, and at low levels in adrenal cortex. Isoform 4 is specifically and highly expressed in pituitary, fetal brain and umbilical vein endothelial cells.

It is found in the golgi apparatus membrane. Its subcellular location is the cell membrane. It localises to the cytoplasm. Functionally, feedback inhibitor of fibroblast growth factor mediated Ras-MAPK signaling and ERK activation. Regulates the nuclear ERK signaling pathway by spatially blocking nuclear translocation of activated ERK without inhibiting cytoplasmic phosphorylation of ERK. Mediates JNK activation and may be involved in apoptosis. May inhibit FGF-induced FGFR1 tyrosine phosphorylation. Might have a role in the early stages of fate specification of GnRH-secreting neurons. Inhibits TGFB-induced epithelial-to-mesenchymal transition in lens epithelial cells. The sequence is that of Interleukin-17 receptor D (IL17RD) from Homo sapiens (Human).